A 286-amino-acid polypeptide reads, in one-letter code: 4-hydroxybenzoate octaprenyltransferase (286 aa).

Helical transmembrane passes span 22 to 42 (IGTL…EKAM), 45 to 65 (LSVL…GCVI), 98 to 118 (LFIV…LYTI), 143 to 163 (FFLG…TIEA), 213 to 233 (IIAL…YLSQ), 238 to 255 (YFIV…QCRL), and 266 to 286 (NAFL…LFGI).

Belongs to the UbiA prenyltransferase family. Mg(2+) is required as a cofactor.

It is found in the cell inner membrane. The catalysed reaction is all-trans-octaprenyl diphosphate + 4-hydroxybenzoate = 4-hydroxy-3-(all-trans-octaprenyl)benzoate + diphosphate. It functions in the pathway cofactor biosynthesis; ubiquinone biosynthesis. Catalyzes the prenylation of para-hydroxybenzoate (PHB) with an all-trans polyprenyl group. Mediates the second step in the final reaction sequence of ubiquinone-8 (UQ-8) biosynthesis, which is the condensation of the polyisoprenoid side chain with PHB, generating the first membrane-bound Q intermediate 3-octaprenyl-4-hydroxybenzoate. The protein is 4-hydroxybenzoate octaprenyltransferase of Histophilus somni (strain 2336) (Haemophilus somnus).